The primary structure comprises 351 residues: Pentatricopeptide repeat-containing protein At2g40240, mitochondrial (351 aa).

A mitochondrion-targeting transit peptide spans Met1–Phe27. PPR repeat units lie at residues Arg106–Leu140, Thr141–Met175, Asp176–Pro210, Asp211–Val245, Leu246–Leu280, and Asp281–Met315.

The protein belongs to the PPR family. P subfamily.

It localises to the mitochondrion. The protein is Pentatricopeptide repeat-containing protein At2g40240, mitochondrial of Arabidopsis thaliana (Mouse-ear cress).